Consider the following 102-residue polypeptide: Co-chaperonin GroES (102 aa).

It belongs to the GroES chaperonin family. As to quaternary structure, heptamer of 7 subunits arranged in a ring. Interacts with the chaperonin GroEL.

It localises to the cytoplasm. Together with the chaperonin GroEL, plays an essential role in assisting protein folding. The GroEL-GroES system forms a nano-cage that allows encapsulation of the non-native substrate proteins and provides a physical environment optimized to promote and accelerate protein folding. GroES binds to the apical surface of the GroEL ring, thereby capping the opening of the GroEL channel. The polypeptide is Co-chaperonin GroES (Chlamydia pneumoniae (Chlamydophila pneumoniae)).